Consider the following 373-residue polypeptide: Transaminase AMT5-2 (373 aa).

Residue R92 participates in pyridoxal 5'-phosphate binding. K196 is subject to N6-(pyridoxal phosphate)lysine. Pyridoxal 5'-phosphate is bound at residue E232.

It belongs to the class-IV pyridoxal-phosphate-dependent aminotransferase family. Pyridoxal 5'-phosphate is required as a cofactor.

The protein operates within mycotoxin biosynthesis. Its function is as follows. Transaminase; part of the gene clusters that mediate the biosynthesis of AM-toxins, host-selective toxins (HSTs) causing Alternaria blotch on apple, a worldwide distributed disease. AM-toxins are cyclic depsipeptides containing the 3 residues 2-hydroxy-isovaleric acid (2-HIV), dehydroalanine, L-alanine which are common for all 3 AM-toxins I to III. The fourth precursor is L-alpha-amino-methoxyphenyl-valeric acid (L-Amv) for AM-toxin I, L-alpha-amino-phenyl-valeric acid (L-Apv) for AM-toxin II, and L-alpha-amino-hydroxyphenyl-valeric acid (L-Ahv) for AM-toxin III. AM-toxins have two target sites for affecting susceptible apple cells; they cause invagination of the plasma membrane and electrolyte loss and chloroplast disorganization. The non-ribosomal peptide synthetase AMT1 contains 4 catalytic modules and is responsible for activation of each residue in AM-toxin. The aldo-keto reductase AMT2 catalyzes the conversion of 2-keto-isovaleric acid (2-KIV) to 2-hydroxy-isovaleric acid (2-HIV), one of the precursor residues incorporated by AMT1 during AM-toxin biosynthesis, by reduction of its ketone to an alcohol. The cytochrome P450 monooxygenase AMT3 and the thioesterase AMT4 are also important for AM-toxin production, but their exact function within the AM-toxin biosynthesis are not known yet. Up to 21 proteins (including AMT1 to AMT4) are predicted to be involved in AM-toxin biosynthesis since their expression ishighly up-regulated in AM-toxin-producing cultures. The sequence is that of Transaminase AMT5-2 from Alternaria alternata (Alternaria rot fungus).